The sequence spans 366 residues: Methylthioribose-1-phosphate isomerase (366 aa).

Residue Asp-260 is the Proton donor of the active site.

The protein belongs to the eIF-2B alpha/beta/delta subunits family. MtnA subfamily.

It localises to the cytoplasm. It is found in the nucleus. The enzyme catalyses 5-(methylsulfanyl)-alpha-D-ribose 1-phosphate = 5-(methylsulfanyl)-D-ribulose 1-phosphate. It participates in amino-acid biosynthesis; L-methionine biosynthesis via salvage pathway; L-methionine from S-methyl-5-thio-alpha-D-ribose 1-phosphate: step 1/6. Functionally, catalyzes the interconversion of methylthioribose-1-phosphate (MTR-1-P) into methylthioribulose-1-phosphate (MTRu-1-P). The sequence is that of Methylthioribose-1-phosphate isomerase from Caenorhabditis elegans.